The sequence spans 176 residues: Protein GrpE (176 aa).

Belongs to the GrpE family. As to quaternary structure, homodimer.

The protein localises to the cytoplasm. Its function is as follows. Participates actively in the response to hyperosmotic and heat shock by preventing the aggregation of stress-denatured proteins, in association with DnaK and GrpE. It is the nucleotide exchange factor for DnaK and may function as a thermosensor. Unfolded proteins bind initially to DnaJ; upon interaction with the DnaJ-bound protein, DnaK hydrolyzes its bound ATP, resulting in the formation of a stable complex. GrpE releases ADP from DnaK; ATP binding to DnaK triggers the release of the substrate protein, thus completing the reaction cycle. Several rounds of ATP-dependent interactions between DnaJ, DnaK and GrpE are required for fully efficient folding. The protein is Protein GrpE of Meiothermus ruber.